A 583-amino-acid polypeptide reads, in one-letter code: Zinc finger protein 277 (583 aa).

C2H2-type zinc fingers lie at residues 351–375 (LQCL…KKQH) and 482–508 (HQCK…DTKH).

The protein belongs to the ZNF277 family. As to quaternary structure, interacts (via zinc-finger domains) with RPS2/40S ribosomal protein S2, perhaps as nascent RPS2 is synthesized during translation; the interaction is direct; the interaction is extra-ribosomal. Interaction with RPS2 competes with the binding of RPS2 to protein arginine methyltransferase PRMT3. Interacts with Polycomb group (PcG) complex protein BMI1. May be part of a complex including at least ZNF277, BMI1 and RNF2/RING2.

Its subcellular location is the nucleus. The protein localises to the cytoplasm. The protein resides in the nucleolus. It localises to the chromosome. Probable transcription factor. Involved in modulation of cellular senescence; represses transcription of the tumor suppressor gene INK4A/ARF, perhaps acting via the Polycomb group (PcG) complex PRC1. This chain is Zinc finger protein 277, found in Mus musculus (Mouse).